A 316-amino-acid chain; its full sequence is Retron Ec73 putative ribosyltransferase/DNA-binding protein (316 aa).

Possible ribosyltransferase/DNA-binding component of antiviral defense system retron Ec73, composed of a non-coding RNA (ncRNA) followed by this protein then a reverse transcriptase (RT). Expression of this retron confers protection against bacteriophages SECphi4, SECphi6, SECphi27 and P1. At multiplicity of infection (MOI) of 0.02 cultures grow normally when infected with SECphi4 without collapsing, at MOI 2 cultures enter growth stasis. This is Retron Ec73 putative ribosyltransferase/DNA-binding protein from Escherichia coli.